Consider the following 152-residue polypeptide: Neuromedin-S (152 aa).

The signal sequence occupies residues 1 to 26; that stretch reads MKHPFPQFPPILVIYCFCMLQIPSSG. 3 consecutive propeptides follow at residues 27 to 69, 70 to 105, and 106 to 108; these read ASPP…VYKR, FLFHYSRAWKSTHPVNSEFAPVHPLMRLAAKLPSRR, and MKR. Position 144 is an asparagine amide (asparagine 144). Positions 147–152 are excised as a propeptide; that stretch reads YTDKVQ.

Belongs to the NmU family. Expressed in the CNS, spleen and testis. Specifically expressed in the suprachiasmatic nuclei (SCN) of the hypothalamus.

The protein resides in the secreted. Its function is as follows. Implicated in the regulation of circadian rhythms through autocrine and/or paracrine actions. Stimulates the contraction of rectum and elevation of blood pressure. The sequence is that of Neuromedin-S (Nms) from Rattus norvegicus (Rat).